The sequence spans 228 residues: Urease accessory protein UreF (228 aa).

The protein belongs to the UreF family. As to quaternary structure, ureD, UreF and UreG form a complex that acts as a GTP-hydrolysis-dependent molecular chaperone, activating the urease apoprotein by helping to assemble the nickel containing metallocenter of UreC. The UreE protein probably delivers the nickel.

It localises to the cytoplasm. Required for maturation of urease via the functional incorporation of the urease nickel metallocenter. The chain is Urease accessory protein UreF from Lachnoclostridium phytofermentans (strain ATCC 700394 / DSM 18823 / ISDg) (Clostridium phytofermentans).